The sequence spans 283 residues: Undecaprenyl-diphosphatase (283 aa).

Helical transmembrane passes span 40–60 (GAAFTAIVQIGTLAAVLIYFF), 85–105 (AKMGWMIAAGTIPIVIFGLLF), 113–133 (LRSLYWISGALIGLALLLTIA), 153–173 (IGWKDALLIGLIQSIALIPGS), 193–213 (AARFSFLLSLPSVLAAGVFQL), 227–247 (LIAIIVATIVSGIVGYASIAF), and 259–279 (VFIIYRLLLGSGILLMLATGM).

This sequence belongs to the UppP family.

The protein resides in the cell inner membrane. The catalysed reaction is di-trans,octa-cis-undecaprenyl diphosphate + H2O = di-trans,octa-cis-undecaprenyl phosphate + phosphate + H(+). Its function is as follows. Catalyzes the dephosphorylation of undecaprenyl diphosphate (UPP). Confers resistance to bacitracin. The sequence is that of Undecaprenyl-diphosphatase from Chlorobium limicola (strain DSM 245 / NBRC 103803 / 6330).